The following is a 382-amino-acid chain: Pyrimidine monooxygenase RutA (382 aa).

FMN is bound by residues 68–69 (IK), Asn134, Glu143, 159–160 (RY), and Ser209.

It belongs to the NtaA/SnaA/DszA monooxygenase family. RutA subfamily.

The enzyme catalyses uracil + FMNH2 + NADH + O2 = (Z)-3-ureidoacrylate + FMN + NAD(+) + H2O + H(+). It carries out the reaction thymine + FMNH2 + NADH + O2 = (Z)-2-methylureidoacrylate + FMN + NAD(+) + H2O + H(+). In terms of biological role, catalyzes the pyrimidine ring opening between N-3 and C-4 by an unusual flavin hydroperoxide-catalyzed mechanism, adding oxygen atoms in the process to yield ureidoacrylate peracid, that immediately reacts with FMN forming ureidoacrylate and FMN-N(5)-oxide. The FMN-N(5)-oxide reacts spontaneously with NADH to produce FMN. Requires the flavin reductase RutF to regenerate FMN in vivo. In Escherichia coli O150:H5 (strain SE15), this protein is Pyrimidine monooxygenase RutA.